The sequence spans 136 residues: Protein scalloped (136 aa).

It is found in the nucleus. Probable transcription factor that function in the regulation of cell-specific gene expression during drosophila development, particularly in the differentiation of the nervous system. The polypeptide is Protein scalloped (SD) (Junonia coenia (Peacock butterfly)).